The primary structure comprises 144 residues: MTIERTFSIVKPDAVKRNLIGAIYRRIEKTGMQVVAAKMLSLTKEQAQGFYAEHEGKEFFDALVEYMTSGPVMVQVLEGESVITRYRELMGKTNPDEAACGSLRSDYAISMRYNSVHGSDSPESAAREIAYFFVEDEICPRPAE.

Residues Lys11, Phe59, Arg87, Thr93, Arg104, and Asn114 each contribute to the ATP site. His117 acts as the Pros-phosphohistidine intermediate in catalysis.

It belongs to the NDK family. As to quaternary structure, homotetramer. Requires Mg(2+) as cofactor.

Its subcellular location is the cytoplasm. The enzyme catalyses a 2'-deoxyribonucleoside 5'-diphosphate + ATP = a 2'-deoxyribonucleoside 5'-triphosphate + ADP. The catalysed reaction is a ribonucleoside 5'-diphosphate + ATP = a ribonucleoside 5'-triphosphate + ADP. Major role in the synthesis of nucleoside triphosphates other than ATP. The ATP gamma phosphate is transferred to the NDP beta phosphate via a ping-pong mechanism, using a phosphorylated active-site intermediate. This Aliivibrio salmonicida (strain LFI1238) (Vibrio salmonicida (strain LFI1238)) protein is Nucleoside diphosphate kinase.